The following is a 278-amino-acid chain: S-formylglutathione hydrolase YeiG (278 aa).

Active-site charge relay system residues include Ser145, Asp223, and His256.

It belongs to the esterase D family.

It catalyses the reaction S-formylglutathione + H2O = formate + glutathione + H(+). In terms of biological role, serine hydrolase involved in the detoxification of formaldehyde. Hydrolyzes S-formylglutathione to glutathione and formate. This is S-formylglutathione hydrolase YeiG (yeiG) from Escherichia coli O139:H28 (strain E24377A / ETEC).